Here is a 332-residue protein sequence, read N- to C-terminus: Isopentenyl phosphate kinase (332 aa).

Methionine 1 is modified (N-acetylmethionine). 18–22 (KLGGA) lines the ATP pocket. Substrate is bound at residue alanine 96. Glycine 97 contacts ATP. 2 residues coordinate substrate: histidine 101 and glycine 202. Residues aspartate 223, 228 to 233 (YDRPPS), glycine 279, and lysine 283 contribute to the ATP site.

This sequence belongs to the isopentenyl phosphate kinase family.

Its subcellular location is the cytoplasm. It is found in the cytosol. The enzyme catalyses isopentenyl phosphate + ATP = isopentenyl diphosphate + ADP. In terms of biological role, catalyzes the formation of isopentenyl diphosphate (IPP), the universal five-carbon isoprenoid building block of all natural isoprenoids. Acts in parallel with the mevalonate (MVA) pathway and plays an important role in regulating the formation of both MVA and methylerythritol phosphate (MEP) pathway-derived terpenoid compounds by controlling the ratio of isopentenyl phosphate (IP) and dimethylallyl phosphate (DMAP) to isopentenyl diphosphate (IPP) and dimethylallyl diphosphate (DMAPP). Controls the levels of IP and DMAP that are competitive inhibitors of the farnesyl diphosphate synthase. Regulates the production of farnesyl diphosphate-derived terpenoids in the cytosol, and geranyl diphosphate-derived compounds in plastids. In Arabidopsis thaliana (Mouse-ear cress), this protein is Isopentenyl phosphate kinase.